We begin with the raw amino-acid sequence, 498 residues long: Type II secretion system protein E (498 aa).

261-268 (GPTGSGKS) provides a ligand contact to ATP. Positions 394, 397, 425, and 428 each coordinate Zn(2+).

Belongs to the GSP E family. Forms homooligomers; most probably hexamers. Interacts with OutL/GspL. The cofactor is Zn(2+).

Its subcellular location is the cell inner membrane. It carries out the reaction ATP + H2O + cellular proteinSide 1 = ADP + phosphate + cellular proteinSide 2.. ATPase component of the type II secretion system required for the energy-dependent secretion of extracellular factors such as proteases and toxins from the periplasm. Acts as a molecular motor to provide the energy that is required for assembly of the pseudopilus and the extrusion of substrates generated in the cytoplasm. This is Type II secretion system protein E (outE) from Pectobacterium carotovorum subsp. carotovorum (Erwinia carotovora subsp. carotovora).